Consider the following 254-residue polypeptide: Ribosomal protein L11 methyltransferase (254 aa).

S-adenosyl-L-methionine contacts are provided by T107, G128, D149, S175, and N191.

Belongs to the methyltransferase superfamily. PrmA family.

It localises to the cytoplasm. The enzyme catalyses L-lysyl-[protein] + 3 S-adenosyl-L-methionine = N(6),N(6),N(6)-trimethyl-L-lysyl-[protein] + 3 S-adenosyl-L-homocysteine + 3 H(+). The catalysed reaction is an N-terminal L-alpha-aminoacyl-[protein] + 3 S-adenosyl-L-methionine = an N-terminal trimethyl-L-alpha-aminoacyl-[protein] + 3 S-adenosyl-L-homocysteine + 3 H(+). Its function is as follows. Methylates ribosomal protein L11. Preferentially recognizes free L11 before its incorporation into 50S subunits. This function is dispensable for growth and thermostability. The sequence is that of Ribosomal protein L11 methyltransferase from Thermus thermophilus (strain ATCC 27634 / DSM 579 / HB8).